Reading from the N-terminus, the 126-residue chain is Ribosome-binding factor A (126 aa).

This sequence belongs to the RbfA family. In terms of assembly, monomer. Binds 30S ribosomal subunits, but not 50S ribosomal subunits or 70S ribosomes.

The protein resides in the cytoplasm. One of several proteins that assist in the late maturation steps of the functional core of the 30S ribosomal subunit. Associates with free 30S ribosomal subunits (but not with 30S subunits that are part of 70S ribosomes or polysomes). Required for efficient processing of 16S rRNA. May interact with the 5'-terminal helix region of 16S rRNA. This Histophilus somni (strain 129Pt) (Haemophilus somnus) protein is Ribosome-binding factor A.